The following is a 324-amino-acid chain: Cuticle collagen lon-3 (324 aa).

A signal peptide spans M1–S30. The segment at V119 to Y324 is disordered. Triple-helical region stretches follow at residues G129–D152, G170–D229, and G235–P294. Composition is skewed to low complexity over residues P136–Q151, P168–P181, P210–S223, G235–Q246, and E261–P273. Over residues K296–N311 the composition is skewed to basic and acidic residues. Basic residues predominate over residues R314–Y324.

It belongs to the cuticular collagen family. In terms of assembly, collagen polypeptide chains are complexed within the cuticle by disulfide bonds and other types of covalent cross-links.

Nematode cuticles are composed largely of collagen-like proteins. The cuticle functions both as an exoskeleton and as a barrier to protect the worm from its environment. Dose-dependent regulator of body length and shape. This Caenorhabditis elegans protein is Cuticle collagen lon-3 (lon-3).